An 852-amino-acid polypeptide reads, in one-letter code: Leucine--tRNA ligase (852 aa).

Residues 41–51 carry the 'HIGH' region motif; sequence PYPSGRIHIGH. The 'KMSKS' region signature appears at 623–627; that stretch reads KMSKS. Residue Lys626 participates in ATP binding.

This sequence belongs to the class-I aminoacyl-tRNA synthetase family.

Its subcellular location is the cytoplasm. It carries out the reaction tRNA(Leu) + L-leucine + ATP = L-leucyl-tRNA(Leu) + AMP + diphosphate. The sequence is that of Leucine--tRNA ligase from Ruegeria pomeroyi (strain ATCC 700808 / DSM 15171 / DSS-3) (Silicibacter pomeroyi).